Here is a 102-residue protein sequence, read N- to C-terminus: Cuticle protein 10.9 (102 aa).

Residue glutamine 1 is modified to Pyrrolidone carboxylic acid. A disordered region spans residues 1–45 (QLAEQYPPHPYSFSYDATDETGARISTSESGDESNSKTGSYSYQT). Positions 8 to 74 (PHPYSFSYDA…SIDTNEPGTK (67 aa)) constitute a Chitin-binding type R&amp;R domain. Residues 36–45 (SKTGSYSYQT) are compositionally biased toward polar residues.

Its function is as follows. Component of the cuticle of the tick. Binds chitin. This Ixodes ricinus (Common tick) protein is Cuticle protein 10.9.